A 150-amino-acid polypeptide reads, in one-letter code: Major facilitator superfamily domain-containing 14C pseudogene (150 aa).

The segment at 1–25 (MSVEPPPELEEKAASEPEAGAMPEK) is disordered. Topologically, residues 1–49 (MSVEPPPELEEKAASEPEAGAMPEKRAGAQAAGSTWLQGFGPPSVYHAA) are extracellular. A helical membrane pass occupies residues 50-70 (IVIFLEFFAWGLLTTPMLTVL). At 71–82 (HETFSQHTFLMN) the chain is on the cytoplasmic side. Residues 83–103 (GLIQGVKGLLSFLSAPLIGAL) form a helical membrane-spanning segment. Residues 104–111 (SDVWGRKP) are Extracellular-facing. The helical transmembrane segment at 112 to 132 (FLLGTVFFTCFPIPLMRISPC) threads the bilayer. Topologically, residues 133-150 (RVWWRAPVVPATCGRRMA) are cytoplasmic.

Belongs to the major facilitator superfamily.

It localises to the membrane. The sequence is that of Major facilitator superfamily domain-containing 14C pseudogene from Homo sapiens (Human).